Consider the following 1086-residue polypeptide: Formin-like protein 2 (1086 aa).

Residue Gly-2 is the site of N-myristoyl glycine attachment. Residues 23 to 469 (LPMPEPGELE…EAIQRQSTLE (447 aa)) enclose the GBD/FH3 domain. Phosphoserine is present on Ser-188. A disordered region spans residues 513–597 (SVGPTMGAAS…APPLPSAPPL (85 aa)). Residues 525 to 537 (PLPPPPPPLPPSS) show a composition bias toward pro residues. Polar residues predominate over residues 538–547 (DTPETVQNGP). 2 stretches are compositionally biased toward pro residues: residues 548 to 576 (VTPP…PLPG) and 583 to 597 (PAPP…APPL). The 392-residue stretch at 616–1007 (IKKPIKTKFR…LMEKLLEQEA (392 aa)) folds into the FH2 domain. The 40-residue stretch at 1040 to 1079 (NRHVYEGKDGAIEDIITVLKTVPFTARTAKRGSRFFCEPV) folds into the DAD domain.

Belongs to the formin homology family.

The protein resides in the cytoplasm. Its function is as follows. Plays a role in the regulation of cell morphology and cytoskeletal organization. Required in the cortical actin filament dynamics. The protein is Formin-like protein 2 of Homo sapiens (Human).